A 596-amino-acid polypeptide reads, in one-letter code: Zinc finger E-box-binding homeobox protein zag-1 (596 aa).

The C2H2-type 1 zinc-finger motif lies at 24–46; sequence FKCPECTKAFKFKHHLKEHIRIH. The C2H2-type 2; degenerate zinc finger occupies 52–72; that stretch reads FECQQCHKRFSHSGSYSSHMS. Over residues 133 to 145 the composition is skewed to polar residues; the sequence is LENGTSPTPTQEP. Disordered regions lie at residues 133-225, 324-369, and 395-421; these read LENG…RPLR, NNSL…EPEW, and GFVT…GSSS. Over residues 165–179 the composition is skewed to basic and acidic residues; it reads SEVKTEVKTEVKTED. Over residues 188–200 the composition is skewed to polar residues; it reads PAVSMSLSPAPEQ. The span at 201–216 shows a compositional bias: low complexity; it reads NGNESMNNGGSGSDGK. The segment at residues 223-282 is a DNA-binding region (homeobox); sequence PLRSRSFLNDSQVAVLQNHFKRNPFPSKYELSAVAEQIGVNKRVVQVWFQNTRAKERRSN. Residues 331 to 355 are compositionally biased toward basic and acidic residues; that stretch reads QDERNNENTDEVMDHDGLKDGKETP. 2 C2H2-type zinc fingers span residues 481-503 and 509-531; these read FSCD…KYEH and YKCD…KRLH. The C2H2-type 5; degenerate zinc finger occupies 537 to 560; the sequence is FQCDKCLKRFSHSGSYSQHMNHRY. Residues 569-596 form a disordered region; sequence QPASPSDVLNGGSVTVSPSSSNTPPPST. The segment covering 578-590 has biased composition (low complexity); sequence NGGSVTVSPSSSN.

Expressed in the six touch receptor neurons (TRNs) but not in the FLP and PVD neurons. Expressed in the M4 cholinergic motor neuron.

It localises to the nucleus. In terms of biological role, transcription factor. Down-regulates expression of genes involved in either the synthesis or reuptake of serotonin, dopamine and GABA. Acts as a transcriptional repressor to regulate multiple, discrete, neuron-specific aspects of terminal differentiation, including cell migration, axonal development and gene expression. Promotes touch receptor neuron differentiation by repressing the expression of egl-44 and egl-46. As egl-44 and egl-46, probably acting as a heterodimer, repress expression of zag-1 in FLP neurons, together these proteins form a bistable, negative-feedback loop that regulates the choice between neuronal fates. Required for axon guidance. Involved in the proper development of the pharynx. Required for pharynx isthmus peristalsis, probably via a role in the differentiation of the M4 cholinergic motor neuron. Directly represses its own transcription by interacting with conserved E-box sequence motifs 5'-CACCTG-3' in its own promoter. May also act as a transcriptional activator of the homeodomain ceh-28. This Caenorhabditis elegans protein is Zinc finger E-box-binding homeobox protein zag-1.